Here is a 395-residue protein sequence, read N- to C-terminus: Nicotinamide/nicotinic acid mononucleotide adenylyltransferase 2 (395 aa).

Disordered stretches follow at residues 1–34 and 62–102; these read MDPT…SGPI and KKNA…NGID. Residues 9-24 are compositionally biased toward pro residues; that stretch reads FKPPQPNEELQPPPDP. Residues Ser-85, Ser-89, and Ser-90 each carry the phosphoserine modification. The NAD(+) site is built by Ser-167 and Phe-168. His-175 and Arg-209 together coordinate ATP. NAD(+) contacts are provided by Thr-247, Gly-282, Asp-284, Trp-295, Arg-314, and Asn-345. Position 350-353 (350-353) interacts with ATP; sequence TKVR.

The protein belongs to the eukaryotic NMN adenylyltransferase family. Requires Co(2+) as cofactor.

It localises to the nucleus. It carries out the reaction beta-nicotinamide D-ribonucleotide + ATP + H(+) = diphosphate + NAD(+). The catalysed reaction is nicotinate beta-D-ribonucleotide + ATP + H(+) = deamido-NAD(+) + diphosphate. It participates in cofactor biosynthesis; NAD(+) biosynthesis; deamido-NAD(+) from nicotinate D-ribonucleotide: step 1/1. It functions in the pathway cofactor biosynthesis; NAD(+) biosynthesis; NAD(+) from nicotinamide D-ribonucleotide: step 1/1. Its function is as follows. Catalyzes the formation of NAD(+) from nicotinamide mononucleotide (NMN) and ATP. Can also use the deamidated form; nicotinic acid mononucleotide (NaMN) as substrate to form deamido-NAD(+) (NaAD). Key enzyme in both de novo and salvage pathways for NAD(+) biosynthesis. Predominantly acts in the salvage pathways via NMN. In Saccharomyces cerevisiae (strain ATCC 204508 / S288c) (Baker's yeast), this protein is Nicotinamide/nicotinic acid mononucleotide adenylyltransferase 2.